Consider the following 382-residue polypeptide: Alkanesulfonate monooxygenase (382 aa).

The protein belongs to the SsuD family.

It carries out the reaction an alkanesulfonate + FMNH2 + O2 = an aldehyde + FMN + sulfite + H2O + 2 H(+). In terms of biological role, catalyzes the desulfonation of aliphatic sulfonates. This is Alkanesulfonate monooxygenase from Pseudomonas putida (strain W619).